The primary structure comprises 453 residues: Gastrin/cholecystokinin type B receptor (453 aa).

The Extracellular portion of the chain corresponds to methionine 1–arginine 57. N-linked (GlcNAc...) asparagine glycosylation is found at asparagine 7, asparagine 30, and asparagine 36. A helical transmembrane segment spans residues isoleucine 58–leucine 79. Residues glycine 80–threonine 87 lie on the Cytoplasmic side of the membrane. A helical transmembrane segment spans residues valine 88 to proline 109. At phenylalanine 110–serine 131 the chain is on the extracellular side. Residues cysteine 127 and cysteine 205 are joined by a disulfide bond. A helical membrane pass occupies residues tyrosine 132 to leucine 150. Over glutamate 151 to histidine 170 the chain is Cytoplasmic. Residues alanine 171–tyrosine 189 traverse the membrane as a helical segment. Topologically, residues proline 190–serine 219 are extracellular. Residues valine 220–serine 242 form a helical membrane-spanning segment. The Cytoplasmic segment spans residues arginine 243–arginine 339. Residues serine 257 to proline 276 form a disordered region. A helical transmembrane segment spans residues methionine 340–tryptophan 361. At arginine 362 to serine 379 the chain is on the extracellular side. Residues phenylalanine 380–histidine 400 traverse the membrane as a helical segment. Residues arginine 401 to glycine 453 lie on the Cytoplasmic side of the membrane. Cysteine 414 carries S-palmitoyl cysteine lipidation.

The protein belongs to the G-protein coupled receptor 1 family.

It is found in the cell membrane. Functionally, receptor for gastrin and cholecystokinin. The CCK-B receptors occur throughout the central nervous system where they modulate anxiety, analgesia, arousal, and neuroleptic activity. This receptor mediates its action by association with G proteins that activate a phosphatidylinositol-calcium second messenger system. This chain is Gastrin/cholecystokinin type B receptor (Cckbr), found in Mus musculus (Mouse).